The following is a 235-amino-acid chain: Protein Thf1 (235 aa).

Residues 179 to 228 are a coiled coil; it reads LNLSSDKLQKDLDLYRSNVDKMGQLLAVIEDALEAERKKREKAKQEVATT.

Belongs to the THF1 family.

In terms of biological role, may be involved in photosynthetic membrane biogenesis. The polypeptide is Protein Thf1 (Rippkaea orientalis (strain PCC 8801 / RF-1) (Cyanothece sp. (strain PCC 8801))).